A 424-amino-acid polypeptide reads, in one-letter code: Histidinol dehydrogenase homolog (424 aa).

2 residues coordinate Zn(2+): Q250 and H253. Active-site proton acceptor residues include E318 and H319. The Zn(2+) site is built by D352 and H411.

It belongs to the histidinol dehydrogenase family. Requires Zn(2+) as cofactor.

The protein is Histidinol dehydrogenase homolog of Shouchella clausii (strain KSM-K16) (Alkalihalobacillus clausii).